We begin with the raw amino-acid sequence, 156 residues long: Small ribosomal subunit protein bS16 (156 aa).

2 stretches are compositionally biased toward low complexity: residues 113-123 (AESGTTAAATT) and 137-156 (EAPA…ASES). Residues 113–156 (AESGTTAAATTPKKKKAPKKDEAAEAPAEAAEAPAEAADAASES) form a disordered region.

Belongs to the bacterial ribosomal protein bS16 family.

This chain is Small ribosomal subunit protein bS16, found in Mycolicibacterium smegmatis (strain ATCC 700084 / mc(2)155) (Mycobacterium smegmatis).